Consider the following 518-residue polypeptide: Arrestin-related trafficking adapter 10 (518 aa).

Lys-118 participates in a covalent cross-link: Glycyl lysine isopeptide (Lys-Gly) (interchain with G-Cter in ubiquitin).

This sequence belongs to the ART10 family. Interacts with RSP5. In terms of processing, ubiquitinated by RSP5.

It localises to the cytoplasm. In terms of biological role, may regulate endocytosis by recruiting RSP5 ubiquitin ligase activity to specific plasma membrane proteins in response to extracellular stimuli. The protein is Arrestin-related trafficking adapter 10 (ART10) of Saccharomyces cerevisiae (strain ATCC 204508 / S288c) (Baker's yeast).